Reading from the N-terminus, the 350-residue chain is Galactokinase (350 aa).

Residue 14–17 (EHTD) participates in substrate binding. ATP-binding positions include S46 and 98–104 (GSGLSSS). Mg(2+) is bound by residues S104 and E136. The active-site Proton acceptor is D148. Y197 is a substrate binding site.

It belongs to the GHMP kinase family. GalK subfamily.

The protein localises to the cytoplasm. It carries out the reaction alpha-D-galactose + ATP = alpha-D-galactose 1-phosphate + ADP + H(+). It participates in carbohydrate metabolism; galactose metabolism. Functionally, catalyzes the transfer of the gamma-phosphate of ATP to D-galactose to form alpha-D-galactose-1-phosphate (Gal-1-P). This chain is Galactokinase, found in Thermococcus kodakarensis (strain ATCC BAA-918 / JCM 12380 / KOD1) (Pyrococcus kodakaraensis (strain KOD1)).